Consider the following 487-residue polypeptide: NADH-quinone oxidoreductase subunit N (487 aa).

The next 14 helical transmembrane spans lie at 12 to 32, 40 to 60, 79 to 99, 104 to 124, 129 to 149, 164 to 184, 201 to 221, 248 to 268, 281 to 301, 310 to 330, 332 to 352, 378 to 398, 411 to 431, and 455 to 475; these read VLILPEILIALGIMALLLIGV, LTVTGLTIALLFATIILIVLF, YMKILTLIGALFSLILSVGFS, FDIFEFPILVLLATLGMMLMI, MLSLYMGLELQSLALYVLAAI, FVLGALSSGLLLYGISLLYGF, ILHLGVIFGIVFILAGLAFKI, APKIAAMALIIRVIVFAFIPL, ILIFMAISSMALGAFAAIGQT, SSIGHMGYALVGLAAGNILGV, GILIYMTIYLGMTIGSFAFIL, AIVMTIQLFSLASIPPMAGFF, GLVPLAIVGMVLSVIGAFYYL, and LCLCLSALFVLFYVFFGFWFS.

It belongs to the complex I subunit 2 family. In terms of assembly, NDH-1 is composed of 14 different subunits. Subunits NuoA, H, J, K, L, M, N constitute the membrane sector of the complex.

It localises to the cell inner membrane. It catalyses the reaction a quinone + NADH + 5 H(+)(in) = a quinol + NAD(+) + 4 H(+)(out). Functionally, NDH-1 shuttles electrons from NADH, via FMN and iron-sulfur (Fe-S) centers, to quinones in the respiratory chain. The immediate electron acceptor for the enzyme in this species is believed to be ubiquinone. Couples the redox reaction to proton translocation (for every two electrons transferred, four hydrogen ions are translocated across the cytoplasmic membrane), and thus conserves the redox energy in a proton gradient. This is NADH-quinone oxidoreductase subunit N from Bartonella bacilliformis (strain ATCC 35685 / KC583 / Herrer 020/F12,63).